The sequence spans 161 residues: Cytochrome c-type biogenesis protein CcmE (161 aa).

Topologically, residues 1–8 (MNPRRKKR) are cytoplasmic. The chain crosses the membrane as a helical; Signal-anchor for type II membrane protein span at residues 9-29 (LGIVLAIFIGISATIGLMLYA). The Periplasmic segment spans residues 30-161 (LNQNMDLFYT…SSEQKQGSGE (132 aa)). Heme-binding residues include His-129 and Tyr-133. Residues 142–161 (MKKTHEPLQYSSEQKQGSGE) form a disordered region. Residues 150–161 (QYSSEQKQGSGE) show a composition bias toward polar residues.

It belongs to the CcmE/CycJ family.

It is found in the cell inner membrane. Functionally, heme chaperone required for the biogenesis of c-type cytochromes. Transiently binds heme delivered by CcmC and transfers the heme to apo-cytochromes in a process facilitated by CcmF and CcmH. This is Cytochrome c-type biogenesis protein CcmE from Vibrio parahaemolyticus serotype O3:K6 (strain RIMD 2210633).